Here is a 321-residue protein sequence, read N- to C-terminus: MSKPIVMERGVKYRDADKMALIPVKNVVTERDALLRKPEWMKIKLPADSTRIQGIKAAMRKNGLHSVCEEASCPNLAECFNHGTATFMILGAICTRRCPFCDVAHGRPVAPDAEEPQKLAQTIADMALRYVVITSVDRDDLRDGGAQHFADCITAIRAKSPEIKIETLVPDFRGRMDRALDILNATPPDVFNHNLENVPRIYRQVRPGADYNWSLKLLERFKEAHPEIPTKSGLMVGLGETNAEIIEVMRDLRRHGVTMLTLGQYLQPSRHHLPVQRYVSPEEFDEMKAEALAMGFTHAACGPCVRSSYHADLQAKGMEVK.

[4Fe-4S] cluster-binding residues include Cys-68, Cys-73, Cys-79, Cys-94, Cys-98, Cys-101, and Ser-308. The Radical SAM core domain occupies 80 to 297 (FNHGTATFMI…KAEALAMGFT (218 aa)).

Belongs to the radical SAM superfamily. Lipoyl synthase family. Requires [4Fe-4S] cluster as cofactor.

The protein localises to the cytoplasm. It carries out the reaction [[Fe-S] cluster scaffold protein carrying a second [4Fe-4S](2+) cluster] + N(6)-octanoyl-L-lysyl-[protein] + 2 oxidized [2Fe-2S]-[ferredoxin] + 2 S-adenosyl-L-methionine + 4 H(+) = [[Fe-S] cluster scaffold protein] + N(6)-[(R)-dihydrolipoyl]-L-lysyl-[protein] + 4 Fe(3+) + 2 hydrogen sulfide + 2 5'-deoxyadenosine + 2 L-methionine + 2 reduced [2Fe-2S]-[ferredoxin]. The protein operates within protein modification; protein lipoylation via endogenous pathway; protein N(6)-(lipoyl)lysine from octanoyl-[acyl-carrier-protein]: step 2/2. Catalyzes the radical-mediated insertion of two sulfur atoms into the C-6 and C-8 positions of the octanoyl moiety bound to the lipoyl domains of lipoate-dependent enzymes, thereby converting the octanoylated domains into lipoylated derivatives. The sequence is that of Lipoyl synthase from Salmonella typhi.